We begin with the raw amino-acid sequence, 215 residues long: Adenylate kinase (215 aa).

Glycine 10–threonine 15 serves as a coordination point for ATP. The tract at residues serine 30 to valine 59 is NMP. Residues threonine 31, arginine 36, lysine 57–valine 59, glycine 85–arginine 88, and glutamine 92 each bind AMP. Positions glycine 126 to aspartate 163 are LID. An ATP-binding site is contributed by arginine 127. 2 residues coordinate Zn(2+): cysteine 130 and cysteine 133. Position 136–137 (serine 136–tyrosine 137) interacts with ATP. Positions 150 and 153 each coordinate Zn(2+). 2 residues coordinate AMP: arginine 160 and arginine 171. Leucine 199 provides a ligand contact to ATP.

The protein belongs to the adenylate kinase family. In terms of assembly, monomer.

It is found in the cytoplasm. It catalyses the reaction AMP + ATP = 2 ADP. The protein operates within purine metabolism; AMP biosynthesis via salvage pathway; AMP from ADP: step 1/1. Catalyzes the reversible transfer of the terminal phosphate group between ATP and AMP. Plays an important role in cellular energy homeostasis and in adenine nucleotide metabolism. This Finegoldia magna (strain ATCC 29328 / DSM 20472 / WAL 2508) (Peptostreptococcus magnus) protein is Adenylate kinase.